We begin with the raw amino-acid sequence, 211 residues long: Glycerol-3-phosphate acyltransferase (211 aa).

5 helical membrane passes run 10–30 (FTTWLIFLISYLIGSIPFGLL), 63–83 (ALTLLCDILKGTLVILVIKFL), 90–110 (NIFISLAGFFAFLGHLFPVWL), 126–146 (LGLYWPAAIVFITAWIVLFLI), and 152–172 (LSALIAVIITPIFVHFSYPYL).

This sequence belongs to the PlsY family. Probably interacts with PlsX.

The protein localises to the cell inner membrane. It carries out the reaction an acyl phosphate + sn-glycerol 3-phosphate = a 1-acyl-sn-glycero-3-phosphate + phosphate. Its pathway is lipid metabolism; phospholipid metabolism. In terms of biological role, catalyzes the transfer of an acyl group from acyl-phosphate (acyl-PO(4)) to glycerol-3-phosphate (G3P) to form lysophosphatidic acid (LPA). This enzyme utilizes acyl-phosphate as fatty acyl donor, but not acyl-CoA or acyl-ACP. In Bartonella henselae (strain ATCC 49882 / DSM 28221 / CCUG 30454 / Houston 1) (Rochalimaea henselae), this protein is Glycerol-3-phosphate acyltransferase.